We begin with the raw amino-acid sequence, 148 residues long: Deoxyuridine 5'-triphosphate nucleotidohydrolase (148 aa).

Residues 68–70 (RSG), N81, 85–87 (TID), and K95 contribute to the substrate site.

This sequence belongs to the dUTPase family. Mg(2+) serves as cofactor.

It carries out the reaction dUTP + H2O = dUMP + diphosphate + H(+). Its pathway is pyrimidine metabolism; dUMP biosynthesis; dUMP from dCTP (dUTP route): step 2/2. Its function is as follows. This enzyme is involved in nucleotide metabolism: it produces dUMP, the immediate precursor of thymidine nucleotides and it decreases the intracellular concentration of dUTP so that uracil cannot be incorporated into DNA. This Rickettsia felis (strain ATCC VR-1525 / URRWXCal2) (Rickettsia azadi) protein is Deoxyuridine 5'-triphosphate nucleotidohydrolase.